Reading from the N-terminus, the 89-residue chain is Small ribosomal subunit protein uS15 (89 aa).

The protein belongs to the universal ribosomal protein uS15 family. As to quaternary structure, part of the 30S ribosomal subunit. Forms a bridge to the 50S subunit in the 70S ribosome, contacting the 23S rRNA.

Its function is as follows. One of the primary rRNA binding proteins, it binds directly to 16S rRNA where it helps nucleate assembly of the platform of the 30S subunit by binding and bridging several RNA helices of the 16S rRNA. In terms of biological role, forms an intersubunit bridge (bridge B4) with the 23S rRNA of the 50S subunit in the ribosome. The chain is Small ribosomal subunit protein uS15 from Dinoroseobacter shibae (strain DSM 16493 / NCIMB 14021 / DFL 12).